A 504-amino-acid polypeptide reads, in one-letter code: Glycerol kinase (504 aa).

ADP is bound at residue Thr-13. Residues Thr-13, Thr-14, and Ser-15 each contribute to the ATP site. Residue Thr-13 participates in sn-glycerol 3-phosphate binding. Residue Arg-17 participates in ADP binding. Sn-glycerol 3-phosphate is bound by residues Arg-83, Glu-84, and Tyr-135. The glycerol site is built by Arg-83, Glu-84, and Tyr-135. His-231 bears the Phosphohistidine; by HPr mark. Asp-245 lines the sn-glycerol 3-phosphate pocket. Glycerol contacts are provided by Asp-245 and Gln-246. Residues Thr-267 and Gly-310 each contribute to the ADP site. Residues Thr-267, Gly-310, Gln-314, and Gly-411 each coordinate ATP. ADP contacts are provided by Gly-411 and Asn-415.

This sequence belongs to the FGGY kinase family. Homotetramer and homodimer (in equilibrium). The phosphoenolpyruvate-dependent sugar phosphotransferase system (PTS), including enzyme I, and histidine-containing protein (HPr) are required for the phosphorylation, which leads to the activation of the enzyme.

The enzyme catalyses glycerol + ATP = sn-glycerol 3-phosphate + ADP + H(+). It functions in the pathway polyol metabolism; glycerol degradation via glycerol kinase pathway; sn-glycerol 3-phosphate from glycerol: step 1/1. With respect to regulation, activated by phosphorylation and inhibited by fructose 1,6-bisphosphate (FBP). Its function is as follows. Key enzyme in the regulation of glycerol uptake and metabolism. Catalyzes the phosphorylation of glycerol to yield sn-glycerol 3-phosphate. The sequence is that of Glycerol kinase from Pediococcus pentosaceus (strain ATCC 25745 / CCUG 21536 / LMG 10740 / 183-1w).